Consider the following 1099-residue polypeptide: Carbamoyl phosphate synthase large chain (1099 aa).

The tract at residues 1 to 402 (MPKREDIKRI…ALGKALRSLE (402 aa)) is carboxyphosphate synthetic domain. Residues R129, R169, G175, G176, E208, V210, E215, G241, I242, H243, Q285, and E299 each coordinate ATP. Residues 133-328 (KETMEKAGLE…IAKVAALLAV (196 aa)) enclose the ATP-grasp 1 domain. Positions 285, 299, and 301 each coordinate Mg(2+). Mn(2+) is bound by residues Q285, E299, and N301. An oligomerization domain region spans residues 403–541 (LDAAPKLDLE…STYNGVENEA (139 aa)). The segment at 542 to 944 (VPSDREKIMI…AFAKAQIAAG (403 aa)) is carbamoyl phosphate synthetic domain. In terms of domain architecture, ATP-grasp 2 spans 666–857 (AKLLKQIGLK…VARIAAKIMV (192 aa)). ATP contacts are provided by R702, K741, L743, E748, G773, V774, H775, S776, Q816, and E828. Q816, E828, and N830 together coordinate Mg(2+). The Mn(2+) site is built by Q816, E828, and N830. Positions 945 to 1099 (NPLPTTGAIL…VRRLTDTWKM (155 aa)) constitute an MGS-like domain. Positions 945–1099 (NPLPTTGAIL…VRRLTDTWKM (155 aa)) are allosteric domain.

This sequence belongs to the CarB family. Composed of two chains; the small (or glutamine) chain promotes the hydrolysis of glutamine to ammonia, which is used by the large (or ammonia) chain to synthesize carbamoyl phosphate. Tetramer of heterodimers (alpha,beta)4. It depends on Mg(2+) as a cofactor. The cofactor is Mn(2+).

The enzyme catalyses hydrogencarbonate + L-glutamine + 2 ATP + H2O = carbamoyl phosphate + L-glutamate + 2 ADP + phosphate + 2 H(+). The catalysed reaction is hydrogencarbonate + NH4(+) + 2 ATP = carbamoyl phosphate + 2 ADP + phosphate + 2 H(+). It participates in amino-acid biosynthesis; L-arginine biosynthesis; carbamoyl phosphate from bicarbonate: step 1/1. It functions in the pathway pyrimidine metabolism; UMP biosynthesis via de novo pathway; (S)-dihydroorotate from bicarbonate: step 1/3. Large subunit of the glutamine-dependent carbamoyl phosphate synthetase (CPSase). CPSase catalyzes the formation of carbamoyl phosphate from the ammonia moiety of glutamine, carbonate, and phosphate donated by ATP, constituting the first step of 2 biosynthetic pathways, one leading to arginine and/or urea and the other to pyrimidine nucleotides. The large subunit (synthetase) binds the substrates ammonia (free or transferred from glutamine from the small subunit), hydrogencarbonate and ATP and carries out an ATP-coupled ligase reaction, activating hydrogencarbonate by forming carboxy phosphate which reacts with ammonia to form carbamoyl phosphate. This chain is Carbamoyl phosphate synthase large chain, found in Thermotoga maritima (strain ATCC 43589 / DSM 3109 / JCM 10099 / NBRC 100826 / MSB8).